The primary structure comprises 768 residues: Cullin-3 (768 aa).

The segment at 677–698 (VAAKQGESDPERKETRQKVDDD) is disordered. The segment covering 682–698 (GESDPERKETRQKVDDD) has biased composition (basic and acidic residues). The 63-residue stretch at 698-760 (DRKHEIEAAI…REYLARTPED (63 aa)) folds into the Cullin neddylation domain. A Glycyl lysine isopeptide (Lys-Gly) (interchain with G-Cter in NEDD8) cross-link involves residue K712.

This sequence belongs to the cullin family. Component of multiple BCR (BTB-CUL3-RBX1) E3 ubiquitin-protein ligase complexes formed of cul3, rbx1 and a variable BTB domain-containing protein acting as both, adapter to cullin and substrate recognition subunit. Interacts with btbd6. Neddylated. Attachment of NEDD8 is required for the E3 ubiquitin-protein ligase activity of the SCF-like complex.

It localises to the nucleus. It participates in protein modification; protein ubiquitination. In terms of biological role, probable core component of cullin-based SCF-like E3 ubiquitin-protein ligase complexes which mediate the ubiquitination and subsequent proteasomal degradation of target proteins. The E3 ubiquitin-protein ligase activity of the complex is dependent on the neddylation of the cullin subunit. Involved in ER-Golgi transport by regulating the size of COPII coats, thereby playing a key role in collagen export, which is required for embryonic stem (ES) cells division. May play a role in the regulation of mittotic entry via ubiquitination of aurka. In Xenopus tropicalis (Western clawed frog), this protein is Cullin-3 (cul3).